The chain runs to 259 residues: Protein IQ-DOMAIN 10 (259 aa).

Residues 18–39 form a disordered region; sequence KNKSNRGNVHSETSNRVKPVES. An IQ domain is found at 50–77; that stretch reads EVAVIRIQKAFRAFKARKRLCSLKSARR. The segment at 61 to 71 is calmodulin-binding; the sequence is RAFKARKRLCS. The tract at residues 226-259 is disordered; the sequence is KPSKKPEKSSPNNVITKTSAKPDEVGNSKKPGSG.

Belongs to the IQD family. In terms of assembly, binds to multiple calmodulin (CaM) in the presence of Ca(2+) and CaM-like proteins.

The protein localises to the nucleus. It is found in the cytoplasm. The protein resides in the cytoskeleton. Functionally, may be involved in cooperative interactions with calmodulins or calmodulin-like proteins. Recruits calmodulin proteins to microtubules, thus being a potential scaffold in cellular signaling and trafficking. May associate with nucleic acids and regulate gene expression at the transcriptional or post-transcriptional level. The sequence is that of Protein IQ-DOMAIN 10 from Arabidopsis thaliana (Mouse-ear cress).